We begin with the raw amino-acid sequence, 523 residues long: 2-isopropylmalate synthase (523 aa).

The 263-residue stretch at 5-267 (VIIFDTTLRD…HTAINHQEIW (263 aa)) folds into the Pyruvate carboxyltransferase domain. Positions 14, 202, 204, and 238 each coordinate Mn(2+). Positions 392-523 (RLDYFSVQSG…QHNENNKETV (132 aa)) are regulatory domain.

Belongs to the alpha-IPM synthase/homocitrate synthase family. LeuA type 1 subfamily. Homodimer. Mn(2+) is required as a cofactor.

It localises to the cytoplasm. The enzyme catalyses 3-methyl-2-oxobutanoate + acetyl-CoA + H2O = (2S)-2-isopropylmalate + CoA + H(+). It functions in the pathway amino-acid biosynthesis; L-leucine biosynthesis; L-leucine from 3-methyl-2-oxobutanoate: step 1/4. Functionally, catalyzes the condensation of the acetyl group of acetyl-CoA with 3-methyl-2-oxobutanoate (2-ketoisovalerate) to form 3-carboxy-3-hydroxy-4-methylpentanoate (2-isopropylmalate). The polypeptide is 2-isopropylmalate synthase (Escherichia coli O81 (strain ED1a)).